An 804-amino-acid polypeptide reads, in one-letter code: Phenylalanine--tRNA ligase beta subunit (804 aa).

Residues 40-161 enclose the tRNA-binding domain; that stretch reads FSMIDYLIIG…KANLGDTEVY (122 aa). The region spanning 413–486 is the B5 domain; it reads EYHQQVKVNY…KILNINLFQP (74 aa). The Mg(2+) site is built by D464, D470, E473, and E474. Residues 710–804 form the FDX-ACB domain; it reads DHYQEVTRDI…DLMKTKQILI (95 aa).

The protein belongs to the phenylalanyl-tRNA synthetase beta subunit family. Type 1 subfamily. Tetramer of two alpha and two beta subunits. Requires Mg(2+) as cofactor.

Its subcellular location is the cytoplasm. The catalysed reaction is tRNA(Phe) + L-phenylalanine + ATP = L-phenylalanyl-tRNA(Phe) + AMP + diphosphate + H(+). This chain is Phenylalanine--tRNA ligase beta subunit, found in Mycoplasmoides gallisepticum (strain R(low / passage 15 / clone 2)) (Mycoplasma gallisepticum).